A 443-amino-acid chain; its full sequence is ATP-dependent protease ATPase subunit HslU (443 aa).

ATP contacts are provided by residues Ile18, 60–65 (GVGKTE), Asp256, Glu321, and Arg393.

The protein belongs to the ClpX chaperone family. HslU subfamily. As to quaternary structure, a double ring-shaped homohexamer of HslV is capped on each side by a ring-shaped HslU homohexamer. The assembly of the HslU/HslV complex is dependent on binding of ATP.

It localises to the cytoplasm. Its function is as follows. ATPase subunit of a proteasome-like degradation complex; this subunit has chaperone activity. The binding of ATP and its subsequent hydrolysis by HslU are essential for unfolding of protein substrates subsequently hydrolyzed by HslV. HslU recognizes the N-terminal part of its protein substrates and unfolds these before they are guided to HslV for hydrolysis. This is ATP-dependent protease ATPase subunit HslU from Buchnera aphidicola subsp. Acyrthosiphon pisum (strain APS) (Acyrthosiphon pisum symbiotic bacterium).